The primary structure comprises 591 residues: Aspartate--tRNA ligase (591 aa).

L-aspartate is bound at residue Glu173. Residues 197 to 200 form an aspartate region; the sequence is QLFK. Arg219 is an L-aspartate binding site. Residues 219 to 221 and Gln228 contribute to the ATP site; that span reads RDE. Residue His448 participates in L-aspartate binding. Position 482 (Glu482) interacts with ATP. Residue Arg489 participates in L-aspartate binding. 534-537 contacts ATP; sequence GLDR.

The protein belongs to the class-II aminoacyl-tRNA synthetase family. Type 1 subfamily. Homodimer.

Its subcellular location is the cytoplasm. The enzyme catalyses tRNA(Asp) + L-aspartate + ATP = L-aspartyl-tRNA(Asp) + AMP + diphosphate. Catalyzes the attachment of L-aspartate to tRNA(Asp) in a two-step reaction: L-aspartate is first activated by ATP to form Asp-AMP and then transferred to the acceptor end of tRNA(Asp). The chain is Aspartate--tRNA ligase from Shewanella sp. (strain MR-4).